Reading from the N-terminus, the 546-residue chain is Casein kinase I homolog 2 (546 aa).

2 stretches are compositionally biased toward polar residues: residues 1–33 (MSQV…SNVR) and 44–55 (HVSSNLNHNTGN). Residues 1-67 (MSQVQSPLTA…ASYSGSQSRD (67 aa)) form a disordered region. At Ser2 the chain carries N-acetylserine. The region spanning 76-360 (YKIGKKIGEG…ETADGQYDWM (285 aa)) is the Protein kinase domain. ATP contacts are provided by residues 82–90 (IGEGSFGVL) and Lys105. Asp195 serves as the catalytic Proton acceptor. 2 disordered regions span residues 373-425 (NKKP…QAQA) and 443-546 (QQAN…LGCC). Positions 412 to 425 (QQQQQQQAQAQAQA) are enriched in low complexity. The span at 453-465 (DDSHYDEEREASK) shows a compositional bias: basic and acidic residues. At Ser455 the chain carries Phosphoserine. Residue Lys465 forms a Glycyl lysine isopeptide (Lys-Gly) (interchain with G-Cter in ubiquitin) linkage. A compositionally biased stretch (low complexity) spans 475 to 496 (QQQTQQKYAQQQQKQMQQKSKQ). Over residues 497–530 (FANTGANGQTNKYPYNAQPTANDEQNAKNAAQDR) the composition is skewed to polar residues. A compositionally biased stretch (low complexity) spans 533-546 (NKSSKGFFSKLGCC). S-palmitoyl cysteine attachment occurs at residues Cys545 and Cys546.

It belongs to the protein kinase superfamily. CK1 Ser/Thr protein kinase family. Casein kinase I subfamily. In terms of processing, palmitoylated by AKR1, which is required for proper plasma membrane localization of YCK2.

It is found in the cell membrane. It catalyses the reaction L-seryl-[protein] + ATP = O-phospho-L-seryl-[protein] + ADP + H(+). The catalysed reaction is L-threonyl-[protein] + ATP = O-phospho-L-threonyl-[protein] + ADP + H(+). Casein kinases are operationally defined by their preferential utilization of acidic proteins such as caseins as substrates. This is Casein kinase I homolog 2 (YCK2) from Saccharomyces cerevisiae (strain ATCC 204508 / S288c) (Baker's yeast).